The following is a 263-amino-acid chain: Mediator of RNA polymerase II transcription subunit 7 (263 aa).

Residues 1-10 show a composition bias toward polar residues; sequence MADAAQQRTL. Disordered regions lie at residues 1-57, 101-122, and 222-247; these read MADA…PAEL, ITQL…SEPS, and GIAA…QKTI. Residues 24 to 47 show a composition bias toward basic and acidic residues; the sequence is FTPDNLKRLEEIKKEASKGEDGKP. Residues 101–111 show a composition bias toward polar residues; it reads ITQLYPSSSPA. Basic and acidic residues predominate over residues 234–247; the sequence is EDGRKESETSQKTI.

This sequence belongs to the Mediator complex subunit 7 family. As to quaternary structure, component of the Mediator complex.

It localises to the nucleus. Its function is as follows. Component of the Mediator complex, a coactivator involved in the regulated transcription of nearly all RNA polymerase II-dependent genes. Mediator functions as a bridge to convey information from gene-specific regulatory proteins to the basal RNA polymerase II transcription machinery. Mediator is recruited to promoters by direct interactions with regulatory proteins and serves as a scaffold for the assembly of a functional preinitiation complex with RNA polymerase II and the general transcription factors. In Aspergillus niger (strain ATCC MYA-4892 / CBS 513.88 / FGSC A1513), this protein is Mediator of RNA polymerase II transcription subunit 7 (med7).